A 445-amino-acid chain; its full sequence is POU domain, class 3, transcription factor 2 (445 aa).

Disordered stretches follow at residues 63 to 173 (TALS…WRSA), 203 to 269 (LGAG…TPTS), 336 to 361 (EADS…KKRT), and 411 to 445 (EKRM…TPVQ). Over residues 68–90 (GGSGGGGGGGGGGGGGGGGGGDG) the composition is skewed to gly residues. Residues 125-151 (QQQHQQQQQQQQQQQQQQQQQQQQQQQ) show a composition bias toward low complexity. A compositionally biased stretch (basic and acidic residues) spans 217-226 (LRDAHDEPHH). Residues 227 to 237 (ADHHPHPHSHP) are compositionally biased toward basic residues. Residues 239-253 (QQPPPPPPPQGPPGH) are compositionally biased toward pro residues. The region spanning 264–338 (EDTPTSDDLE…LLNKWLEEAD (75 aa)) is the POU-specific domain. A Phosphoserine modification is found at serine 343. The homeobox DNA-binding region spans 356–415 (KRKKRTSIEVSVKGALESHFLKCPKPSAQEITSLADSLQLEKEVVRVWFCNRRQKEKRMT).

It belongs to the POU transcription factor family. Class-3 subfamily. In terms of assembly, interacts with PQBP1. Interaction with ISL1. Expressed specifically at high levels in the brain.

It localises to the nucleus. In terms of biological role, transcription factor that plays a key role in neuronal differentiation. Binds preferentially to the recognition sequence which consists of two distinct half-sites, ('GCAT') and ('TAAT'), separated by a non-conserved spacer region of 0, 2, or 3 nucleotides. Acts as a transcriptional activator when binding cooperatively with SOX4, SOX11, or SOX12 to gene promoters. The combination of three transcription factors, ASCL1, POU3F2/BRN2 and MYT1L, is sufficient to reprogram fibroblasts and other somatic cells into induced neuronal (iN) cells in vitro. Acts downstream of ASCL1, accessing chromatin that has been opened by ASCL1, and promotes transcription of neuronal genes. The protein is POU domain, class 3, transcription factor 2 (Pou3f2) of Rattus norvegicus (Rat).